A 361-amino-acid chain; its full sequence is Cdc42 effector protein 1 (361 aa).

Positions 1–29 are disordered; it reads MPGPQGAGGAPAMNLGKLSPVGWVSSSQG. 2 positions are modified to phosphoserine: serine 19 and serine 27. Threonine 34 bears the Phosphothreonine mark. Positions 38–52 constitute a CRIB domain; sequence ISPPLGDFRHTMHVG. Serine 39 carries the post-translational modification Phosphoserine. Arginine 53 carries the post-translational modification Omega-N-methylarginine. Residues serine 65, serine 73, serine 77, serine 101, serine 113, serine 121, serine 139, serine 180, serine 190, serine 192, and serine 195 each carry the phosphoserine modification. Positions 161–186 are disordered; that stretch reads CTISRLPRPEKPRDRDRDSSFPAEPE. Residues 167–186 show a composition bias toward basic and acidic residues; that stretch reads PRPEKPRDRDRDSSFPAEPE. Disordered regions lie at residues 218–300 and 320–361; these read EGSA…SRHH and SWGS…EVKV. 4 consecutive repeat copies span residues 220–226, 229–235, 236–242, and 243–249. Residues 220–249 are 4 X 7 AA tandem repeats of [PT]-[AT]-A-[ENT]-[PT]-[PTS]-[AG]; the sequence is SAAETPAPAPAASPPASVANPPAPASSPSL. Phosphoserine occurs at positions 270, 320, and 323. A compositionally biased stretch (polar residues) spans 332 to 347; the sequence is QAGSRTPVPSTVQANT. The span at 351–361 shows a compositional bias: acidic residues; sequence ADAEEDDEVKV.

The protein belongs to the BORG/CEP family. As to quaternary structure, interacts with RHOQ and CDC42, in a GTP-dependent manner.

The protein localises to the endomembrane system. It is found in the cytoplasm. The protein resides in the cytoskeleton. Functionally, probably involved in the organization of the actin cytoskeleton. Induced membrane extensions in fibroblasts. The protein is Cdc42 effector protein 1 of Bos taurus (Bovine).